The following is a 148-amino-acid chain: Ribonuclease pancreatic (148 aa).

The signal sequence occupies residues 1–25; sequence MGLEKSLLLLPLLVLVLGCVQPSLG. Substrate is bound by residues Lys32 and Arg35. Residue His37 is the Proton acceptor of the active site. Disulfide bonds link Cys50–Cys108, Cys64–Cys119, Cys82–Cys134, and Cys89–Cys96. Substrate-binding positions include 65–69 and Lys90; that span reads KPVNT. His143 acts as the Proton donor in catalysis.

This sequence belongs to the pancreatic ribonuclease family. As to quaternary structure, monomer. Interacts with and forms tight 1:1 complexes with RNH1. Dimerization of two such complexes may occur. Interaction with RNH1 inhibits this protein. As to expression, pancreas.

The protein resides in the secreted. It catalyses the reaction an [RNA] containing cytidine + H2O = an [RNA]-3'-cytidine-3'-phosphate + a 5'-hydroxy-ribonucleotide-3'-[RNA].. The catalysed reaction is an [RNA] containing uridine + H2O = an [RNA]-3'-uridine-3'-phosphate + a 5'-hydroxy-ribonucleotide-3'-[RNA].. Endonuclease that catalyzes the cleavage of RNA on the 3' side of pyrimidine nucleotides. Acts on single-stranded and double-stranded RNA. In Gerbillus nigeriae (Nigerian gerbil), this protein is Ribonuclease pancreatic (RNASE1).